Here is a 75-residue protein sequence, read N- to C-terminus: Small ribosomal subunit protein bS18 (75 aa).

Belongs to the bacterial ribosomal protein bS18 family. As to quaternary structure, part of the 30S ribosomal subunit. Forms a tight heterodimer with protein bS6.

Its function is as follows. Binds as a heterodimer with protein bS6 to the central domain of the 16S rRNA, where it helps stabilize the platform of the 30S subunit. This is Small ribosomal subunit protein bS18 from Thermotoga sp. (strain RQ2).